The primary structure comprises 589 residues: TAF5-like RNA polymerase II p300/CBP-associated factor-associated factor 65 kDa subunit 5L (589 aa).

Residues 211 to 221 (ASGSSSRSENN) show a composition bias toward polar residues. The interval 211 to 230 (ASGSSSRSENNGLEPPDMPS) is disordered. 6 WD repeats span residues 266–305 (NTEQ…LKSE), 340–379 (GHCG…NTVL), 382–421 (GHAY…PLRI), 424–463 (GHLA…SVRL), 466–505 (GHRG…LYKE), and 508–547 (GHTD…CSAP).

This sequence belongs to the WD repeat TAF5 family. As to quaternary structure, the PCAF complex is composed of a number of TBP-associated factors (TAFS), such as TAF5, TAF5L, TAF6, TAF6L, TAF9, TAF10 and TAF12, PCAF, and also PCAF-associated factors (PAFs), such as TADA2L/ADA2, TADA3L/ADA3 and SPT3. Component of the STAGA transcription coactivator-HAT complex, at least composed of SUPT3H, GCN5L2, TAF5L, TAF6L, SUPT7L, TADA3L, TAD1L, TAF10, TAF12, TRRAP and TAF9.

It localises to the nucleus. Its function is as follows. Functions as a component of the PCAF complex. The PCAF complex is capable of efficiently acetylating histones in a nucleosomal context. The PCAF complex could be considered as the human version of the yeast SAGA complex. With TAF6L, acts as an epigenetic regulator essential for somatic reprogramming. Regulates target genes through H3K9ac deposition and MYC recruitment which trigger MYC regulatory network to orchestrate gene expression programs to control embryonic stem cell state. The sequence is that of TAF5-like RNA polymerase II p300/CBP-associated factor-associated factor 65 kDa subunit 5L from Homo sapiens (Human).